The sequence spans 282 residues: MEMO1 family protein Cmaq_1590 (282 aa).

The protein belongs to the MEMO1 family.

The sequence is that of MEMO1 family protein Cmaq_1590 from Caldivirga maquilingensis (strain ATCC 700844 / DSM 13496 / JCM 10307 / IC-167).